Reading from the N-terminus, the 52-residue chain is Conotoxin Cal6.25 (52 aa).

The first 22 residues, 1–22 (MKLTHVLIVAVLVLTVCHLTMA), serve as a signal peptide directing secretion. 3 disulfide bridges follow: Cys-24–Cys-41, Cys-31–Cys-45, and Cys-40–Cys-50.

In terms of tissue distribution, expressed by the venom duct.

It is found in the secreted. Probable neurotoxin. This Californiconus californicus (California cone) protein is Conotoxin Cal6.25.